Here is a 256-residue protein sequence, read N- to C-terminus: Gluconate 5-dehydrogenase (256 aa).

Leu-15–Val-39 lines the NADP(+) pocket. Ser-147 provides a ligand contact to substrate. Tyr-160 acts as the Proton acceptor in catalysis.

It belongs to the short-chain dehydrogenases/reductases (SDR) family. Homodimer.

The protein resides in the cytoplasm. The enzyme catalyses D-gluconate + NADP(+) = 5-dehydro-D-gluconate + NADPH + H(+). In terms of biological role, catalyzes the reversible NADP-dependent oxidation of gluconate to 5-ketogluconate. Is involved in the non-phosphorylative, ketogenic oxidation of glucose. Is almost inactive with NAD as cosubstrate. Displays high substrate specificity since D-Glucose, D-sorbitol, and D-mannitol are not oxidized by the enzyme, and 2-ketogluconate and L-sorbose are not reduced. Can accept D-fructose as a substrate, with a rate that is only 10% of the rate of 5-ketogluconate reduction. This is Gluconate 5-dehydrogenase from Gluconobacter oxydans (strain 621H) (Gluconobacter suboxydans).